The sequence spans 156 residues: Putative increased recombination centers protein 11 (156 aa).

The chain crosses the membrane as a helical span at residues 20–42 (AALGATCLLHYLTTSLSIRFFFH).

Its subcellular location is the membrane. This chain is Putative increased recombination centers protein 11 (IRC11), found in Saccharomyces cerevisiae (strain ATCC 204508 / S288c) (Baker's yeast).